Here is a 119-residue protein sequence, read N- to C-terminus: Albumin-1 (119 aa).

Residues 1-19 (MAVFLLATSTIMFPTKIEA) form the signal peptide. Disulfide bonds link cysteine 22/cysteine 39, cysteine 26/cysteine 41, and cysteine 34/cysteine 51. 2 propeptides span residues 57–64 (LSSVAKMI) and 117–119 (TTK).

The C-terminal glycine may be removed from A1b.

Functionally, A1b binds to basic 7S globulin (BG) and stimulates its phosphorylation activity. Involved in the signal transduction system to regulate the growth and differentiation as a hormone peptide. This is Albumin-1 from Glycine max (Soybean).